A 362-amino-acid polypeptide reads, in one-letter code: 5'-tyrosyl-DNA phosphodiesterase (362 aa).

Over residues 1–10 (MSNSDDEIQE) the composition is skewed to acidic residues. The segment at 1 to 43 (MSNSDDEIQEIEAKRQKMSQEDSEVEIEILDEPEQGKLKNSSM) is disordered. The span at 11 to 20 (IEAKRQKMSQ) shows a compositional bias: basic and acidic residues. Residues 21–33 (EDSEVEIEILDEP) show a composition bias toward acidic residues. Residues 126-130 (NIDGL) are interaction with 5' end of substrate DNA. Mg(2+) is bound by residues Asp-128 and Glu-158. The interval 232–237 (HLESTR) is interaction with 5' end of substrate DNA. Asp-271 serves as the catalytic Proton donor/acceptor. The segment at 273 to 275 (NLR) is interaction with 5' end of substrate DNA.

The protein belongs to the CCR4/nocturin family. TTRAP/TDP2 subfamily. In terms of assembly, interacts with mxl-1; the interaction promotes axon regeneration after injury. Interacts with ets-4; the interaction is required for the sumoylation of ets-4. It depends on Mg(2+) as a cofactor. Requires Mn(2+) as cofactor.

The protein localises to the nucleus. Its subcellular location is the PML body. DNA repair enzyme that can remove a variety of covalent adducts from DNA through hydrolysis of a 5'-phosphodiester bond, giving rise to DNA with a free 5' phosphate. Catalyzes the hydrolysis of dead-end complexes between DNA and the topoisomerase 2 (top2) active site tyrosine residue. Hydrolyzes 5'-phosphoglycolates on protruding 5' ends on DNA double-strand breaks (DSBs) due to DNA damage by radiation and free radicals. Inhibits axon regeneration after neuronal injury by promoting the sumoylation of ets-4, thereby inhibiting the phosphorylation of ets-4 required for probable interaction with cebp-1 and activation of svh-2 expression. This chain is 5'-tyrosyl-DNA phosphodiesterase, found in Caenorhabditis elegans.